Consider the following 400-residue polypeptide: MPMMWLFLTTACLIPGTLSAGGFLDFENKVNPEVWMNASEIIMYNGYPSEEYDVTTADGYILAINRIPHGRAQTGQTGPRPVVYMQHALFADNAYWLENFANGSLGFILADAGYDVWMGNSRGNTWSRRHKTLSANEEKFWAFSFNEMAKYDLPGIIDFIVNKTGQEKLYFIGHSLGTTIGFVAFSTMPELAQRIKMNFALGPVISFKYPTSVFTNLFLLPKSIIKLVFGTKGVLLEDKNARMSFITFCNQKLLQPLCSEFMSLWAGFNKKNMNMSRLDVYMAHAPTGSSIQNMLHIKQLYRSDEFRAYDWGSEAENMNHYNQSYPPLYDLTAMKVPTAIWAGGHDVLVTPQDVARILPQITNLRYFKQFPDWNHFDFVWGLDAPQRLYSKIISLMKEYF.

Residues 1-19 (MPMMWLFLTTACLIPGTLS) form the signal peptide. Positions 81–381 (PVVYMQHALF…DWNHFDFVWG (301 aa)) constitute an AB hydrolase-1 domain. Ser-175 acts as the Nucleophile in catalysis. Cys-249 and Cys-258 are joined by a disulfide. N-linked (GlcNAc...) asparagine glycosylation is present at Asn-274. Catalysis depends on charge relay system residues Asp-346 and His-375.

This sequence belongs to the AB hydrolase superfamily. Lipase family. In terms of tissue distribution, highly expressed in the epidermis. Also detected in other tissues, although at much lower levels, including liver and kidney.

It is found in the secreted. It carries out the reaction a sterol ester + H2O = a sterol + a fatty acid + H(+). It catalyses the reaction a triacylglycerol + H2O = a 1,2-diacylglycerol + a fatty acid + H(+). The catalysed reaction is a triacylglycerol + H2O = a diacylglycerol + a fatty acid + H(+). The enzyme catalyses a cholesterol ester + H2O = cholesterol + a fatty acid + H(+). Functionally, plays a highly specific role in the last step of keratinocyte differentiation. Contains two distinct domains: the alpha/beta hydrolase fold and the abhydrolase-associated lipase region, also features the consensus sequence of the active site of a genuine lipase. May have an essential function in lipid metabolism of the most differentiated epidermal layers. In Mus musculus (Mouse), this protein is Lipase member N (Lipn).